Reading from the N-terminus, the 20-residue chain is LPSDATLVLDQTGKELDARL.

The protein localises to the vacuole. Its function is as follows. Inhibitor of serine proteases chymotrypsin, pepsin and trypsin. Has strong antifungal activity against the human pathogenic fungi C.albicans TIMM 1768, S.cerevisiae KCTC 7296 and T.beigelli KCTC 7707, but lacks antifungal activity against the plant pathogenic fungi C.gloeosporioides KACC 40003, C.coccodes KACC 40803 and D.bryoniae KACC 40669. Lacks hemolytic activity against human erythrocytes. This is Antifungal protein J from Solanum tuberosum (Potato).